The sequence spans 433 residues: Enolase (433 aa).

Q167 is a (2R)-2-phosphoglycerate binding site. The active-site Proton donor is the E209. The Mg(2+) site is built by D246, E291, and D318. Residues K343, R372, S373, and K394 each coordinate (2R)-2-phosphoglycerate. The active-site Proton acceptor is the K343.

Belongs to the enolase family. In terms of assembly, component of the RNA degradosome, a multiprotein complex involved in RNA processing and mRNA degradation. Mg(2+) is required as a cofactor.

The protein localises to the cytoplasm. It is found in the secreted. It localises to the cell surface. It carries out the reaction (2R)-2-phosphoglycerate = phosphoenolpyruvate + H2O. It functions in the pathway carbohydrate degradation; glycolysis; pyruvate from D-glyceraldehyde 3-phosphate: step 4/5. Catalyzes the reversible conversion of 2-phosphoglycerate (2-PG) into phosphoenolpyruvate (PEP). It is essential for the degradation of carbohydrates via glycolysis. The sequence is that of Enolase from Aeromonas hydrophila subsp. hydrophila (strain ATCC 7966 / DSM 30187 / BCRC 13018 / CCUG 14551 / JCM 1027 / KCTC 2358 / NCIMB 9240 / NCTC 8049).